A 342-amino-acid polypeptide reads, in one-letter code: Autoinducer 2 import system permease protein LsrC (342 aa).

The Periplasmic segment spans residues 1–13 (MLKFIQNNREITA). A helical transmembrane segment spans residues 14–34 (LLAVVLLFVLPGFLDRQYLSV). Topologically, residues 35 to 38 (QTLT) are cytoplasmic. A helical membrane pass occupies residues 39 to 59 (MVYSSAQILILLAMGATLVML). At 60–69 (TRNIDVSVGS) the chain is on the periplasmic side. Residues 70-90 (ITGMCAVLLGMLLNAGYSLPV) traverse the membrane as a helical segment. Residues 91–92 (AC) are Cytoplasmic-facing. A helical transmembrane segment spans residues 93–113 (VATLLLGLLAGFFNGVLVAWL). A topological domain (periplasmic) is located at residue lysine 114. The chain crosses the membrane as a helical span at residues 115 to 135 (IPAIVATLGTLGLYRGIMLLW). Over 136 to 154 (TGGKWIEGLPAELKQLSAP) the chain is Cytoplasmic. The chain crosses the membrane as a helical span at residues 155 to 175 (LLFGVSAIGWLTIILVAFMAW). Over 176–212 (LLAKTAFGRSFYVTGDNLQGARQLGVRTEAIRIVAFS) the chain is Periplasmic. The helical transmembrane segment at 213 to 233 (LNGCMAALAGIVFASQIGFIP) threads the bilayer. Residues 234-251 (NQTGTGLEMKAIAACVLG) are Cytoplasmic-facing. A helical membrane pass occupies residues 252-272 (GISLLGGSGAIIGAVLGAWFL). The Periplasmic portion of the chain corresponds to 273 to 283 (TQIDSVLVLLR). Residues 284 to 304 (IPAWWNDFIAGMVLLAVLVFD) traverse the membrane as a helical segment. Topologically, residues 305–342 (GRLRCALERNLRRQKYARFMMPPPPVKPASSGKKREAA) are cytoplasmic.

The protein belongs to the binding-protein-dependent transport system permease family. AraH/RbsC subfamily. The complex is composed of two ATP-binding proteins (LsrA), two transmembrane proteins (LsrC and LsrD) and a solute-binding protein (LsrB).

It is found in the cell inner membrane. In terms of biological role, part of the ABC transporter complex LsrABCD involved in autoinducer 2 (AI-2) import. Probably responsible for the translocation of the substrate across the membrane. This chain is Autoinducer 2 import system permease protein LsrC (lsrC), found in Escherichia coli (strain SMS-3-5 / SECEC).